Here is a 572-residue protein sequence, read N- to C-terminus: Urease subunit alpha (572 aa).

In terms of domain architecture, Urease spans 136–572; it reads GGIDTHIHWI…VPLAQRYFLF (437 aa). Ni(2+) is bound by residues His141, His143, and Lys224. Lys224 carries the N6-carboxylysine modification. Residue His226 participates in substrate binding. Ni(2+) contacts are provided by His253 and His279. The active-site Proton donor is the His327. Position 367 (Asp367) interacts with Ni(2+).

It belongs to the metallo-dependent hydrolases superfamily. Urease alpha subunit family. Heterotrimer of UreA (gamma), UreB (beta) and UreC (alpha) subunits. Three heterotrimers associate to form the active enzyme. Requires Ni cation as cofactor. Carboxylation allows a single lysine to coordinate two nickel ions.

Its subcellular location is the cytoplasm. It carries out the reaction urea + 2 H2O + H(+) = hydrogencarbonate + 2 NH4(+). It functions in the pathway nitrogen metabolism; urea degradation; CO(2) and NH(3) from urea (urease route): step 1/1. The chain is Urease subunit alpha from Actinobacillus pleuropneumoniae (Haemophilus pleuropneumoniae).